A 129-amino-acid chain; its full sequence is MIVGIGIDIVELERIRSLLERSRKFPERILTPREKAQFGELPPARQAEFLAGRFAAKEAYAKALGTGIGRHLSFQDIEIVSDEHGKPSIAARRDGETVHLSISHSRDYAVAQVVIERLGPMTPADACHG.

D8 and E58 together coordinate Mg(2+).

The protein belongs to the P-Pant transferase superfamily. AcpS family. It depends on Mg(2+) as a cofactor.

The protein localises to the cytoplasm. The catalysed reaction is apo-[ACP] + CoA = holo-[ACP] + adenosine 3',5'-bisphosphate + H(+). Functionally, transfers the 4'-phosphopantetheine moiety from coenzyme A to a Ser of acyl-carrier-protein. The polypeptide is Holo-[acyl-carrier-protein] synthase (Geobacillus kaustophilus (strain HTA426)).